Here is a 403-residue protein sequence, read N- to C-terminus: Argininosuccinate synthase (403 aa).

10–18 (AYSGGLDTS) lines the ATP pocket. Tyr87 provides a ligand contact to L-citrulline. Gly117 is a binding site for ATP. Residues Thr119, Asn123, and Asp124 each coordinate L-aspartate. Residue Asn123 participates in L-citrulline binding. Residues Arg127, Ser175, Glu260, and Tyr272 each contribute to the L-citrulline site.

It belongs to the argininosuccinate synthase family. Type 1 subfamily. In terms of assembly, homotetramer.

It localises to the cytoplasm. The catalysed reaction is L-citrulline + L-aspartate + ATP = 2-(N(omega)-L-arginino)succinate + AMP + diphosphate + H(+). It functions in the pathway amino-acid biosynthesis; L-arginine biosynthesis; L-arginine from L-ornithine and carbamoyl phosphate: step 2/3. In Bacillus subtilis (strain 168), this protein is Argininosuccinate synthase.